The sequence spans 606 residues: (R)-limonene synthase 1, chloroplastic (606 aa).

The N-terminal 32 residues, 1-32, are a transit peptide targeting the chloroplast; it reads MSSCINPSTLVTSVNAFKCLPLATNKAAIRIM. Mn(2+) contacts are provided by Asp-342 and Asp-346. Substrate contacts are provided by Asp-342, Asp-346, Arg-484, Asp-487, and Lys-503. A DDXXD motif motif is present at residues 342–346; the sequence is DDIYD. Mn(2+) is bound at residue Asp-487.

It belongs to the terpene synthase family. Requires Mg(2+) as cofactor. Mn(2+) is required as a cofactor.

The protein resides in the plastid. It is found in the chloroplast. The catalysed reaction is (2E)-geranyl diphosphate = (4R)-limonene + diphosphate. The chain is (R)-limonene synthase 1, chloroplastic from Citrus limon (Lemon).